The chain runs to 114 residues: UPF0342 protein LSEI_1724 (114 aa).

The protein belongs to the UPF0342 family.

The chain is UPF0342 protein LSEI_1724 from Lacticaseibacillus paracasei (strain ATCC 334 / BCRC 17002 / CCUG 31169 / CIP 107868 / KCTC 3260 / NRRL B-441) (Lactobacillus paracasei).